We begin with the raw amino-acid sequence, 332 residues long: Hygromycin-B 7''-O-kinase (332 aa).

The active-site Proton acceptor is the Asp-223.

The protein belongs to the aminoglycoside phosphotransferase family.

It catalyses the reaction hygromycin B + ATP = 7''-O-phosphohygromycin B + ADP + H(+). In terms of biological role, the aminoglycoside phosphotransferases achieve inactivation of their antibiotic substrates by phosphorylation. This chain is Hygromycin-B 7''-O-kinase (hyg), found in Streptomyces hygroscopicus.